The chain runs to 439 residues: Acyl-coenzyme A thioesterase 10, mitochondrial (439 aa).

The transit peptide at 1 to 21 (MKRAAMRLWTLNKGLLTHGRG) directs the protein to the mitochondrion. HotDog ACOT-type domains follow at residues 85–209 (SYIE…QDSE) and 289–401 (EDTK…EKEV).

It belongs to the acyl coenzyme A hydrolase family.

It is found in the mitochondrion. Catalyzes the hydrolysis of acyl-CoAs into free fatty acids and coenzyme A (CoASH), regulating their respective intracellular levels. Active on long chain acyl-CoAs. The sequence is that of Acyl-coenzyme A thioesterase 10, mitochondrial from Mus musculus (Mouse).